Reading from the N-terminus, the 257-residue chain is Staphylococcal secretory antigen SsaA (257 aa).

Positions 1–26 are cleaved as a signal peptide; the sequence is MKKIATATIATAGIATFAFAHHDAQA. Tandem repeats lie at residues 73–75, 76–78, 84–86, 87–89, 90–92, 93–95, 96–98, and 99–101. The interval 73-101 is 8 X 3 AA repeats of Y-[NS]-N; it reads YNNYNNYNYYGYNNYSNYNNYSNYNNYNN. The disordered stretch occupies residues 101 to 144; it reads NYQSNNTQSQRTTQPTGGLGASYSTSSSNVHVTTTSAPSSNGVS. The span at 107 to 116 shows a compositional bias: polar residues; that stretch reads TQSQRTTQPT. Low complexity predominate over residues 122 to 136; sequence SYSTSSSNVHVTTTS. A Peptidase C51 domain is found at 136–257; that stretch reads SAPSSNGVSL…SQAASYNYIH (122 aa).

The protein localises to the secreted. Its function is as follows. Not known; immunogenic protein expressed during sepsis and particularly during episodes of infective endocarditis. In Staphylococcus epidermidis, this protein is Staphylococcal secretory antigen SsaA (ssaA).